The following is a 202-amino-acid chain: dTTP/UTP pyrophosphatase (202 aa).

Catalysis depends on Asp-74, which acts as the Proton acceptor.

It belongs to the Maf family. YhdE subfamily. It depends on a divalent metal cation as a cofactor.

It localises to the cytoplasm. It carries out the reaction dTTP + H2O = dTMP + diphosphate + H(+). The enzyme catalyses UTP + H2O = UMP + diphosphate + H(+). Nucleoside triphosphate pyrophosphatase that hydrolyzes dTTP and UTP. May have a dual role in cell division arrest and in preventing the incorporation of modified nucleotides into cellular nucleic acids. This Methylococcus capsulatus (strain ATCC 33009 / NCIMB 11132 / Bath) protein is dTTP/UTP pyrophosphatase.